A 346-amino-acid chain; its full sequence is Haptoglobin-related protein (346 aa).

A signal peptide (not cleaved) is located at residues 1 to 16 (DLGAVIYLLLWGRQLF). The Sushi domain occupies 32-85 (FPKPPEIANGYVEHLFRYQRKNYYRLRTEGDGVYTLNDKKQWINKAVGDKLPEC). A Peptidase S1 domain is found at 102-344 (ILGGHLDAKG…IHVWVQKTIA (243 aa)). Disulfide bonds link Cys249/Cys280 and Cys291/Cys321.

It belongs to the peptidase S1 family.

The protein resides in the secreted. Functionally, primate-specific plasma protein associated with apolipoprotein L-I (apoL-I)-containing high-density lipoprotein (HDL). Binds hemoglobin with high affinity and may contribute to the clearance of cell-free hemoglobin to allow hepatic recycling of heme iron. This Pan troglodytes (Chimpanzee) protein is Haptoglobin-related protein (HPR).